The primary structure comprises 173 residues: Crossover junction endodeoxyribonuclease RuvC (173 aa).

Catalysis depends on residues Asp8, Glu67, and Asp139. The Mg(2+) site is built by Asp8, Glu67, and Asp139.

This sequence belongs to the RuvC family. As to quaternary structure, homodimer which binds Holliday junction (HJ) DNA. The HJ becomes 2-fold symmetrical on binding to RuvC with unstacked arms; it has a different conformation from HJ DNA in complex with RuvA. In the full resolvosome a probable DNA-RuvA(4)-RuvB(12)-RuvC(2) complex forms which resolves the HJ. Mg(2+) serves as cofactor.

It is found in the cytoplasm. The catalysed reaction is Endonucleolytic cleavage at a junction such as a reciprocal single-stranded crossover between two homologous DNA duplexes (Holliday junction).. The RuvA-RuvB-RuvC complex processes Holliday junction (HJ) DNA during genetic recombination and DNA repair. Endonuclease that resolves HJ intermediates. Cleaves cruciform DNA by making single-stranded nicks across the HJ at symmetrical positions within the homologous arms, yielding a 5'-phosphate and a 3'-hydroxyl group; requires a central core of homology in the junction. The consensus cleavage sequence is 5'-(A/T)TT(C/G)-3'. Cleavage occurs on the 3'-side of the TT dinucleotide at the point of strand exchange. HJ branch migration catalyzed by RuvA-RuvB allows RuvC to scan DNA until it finds its consensus sequence, where it cleaves and resolves the cruciform DNA. This Shewanella woodyi (strain ATCC 51908 / MS32) protein is Crossover junction endodeoxyribonuclease RuvC.